The following is a 275-amino-acid chain: Ribosomal RNA small subunit methyltransferase A (275 aa).

Residues asparagine 21, leucine 23, glycine 48, glutamate 69, aspartate 94, and asparagine 115 each coordinate S-adenosyl-L-methionine.

Belongs to the class I-like SAM-binding methyltransferase superfamily. rRNA adenine N(6)-methyltransferase family. RsmA subfamily.

The protein resides in the cytoplasm. It catalyses the reaction adenosine(1518)/adenosine(1519) in 16S rRNA + 4 S-adenosyl-L-methionine = N(6)-dimethyladenosine(1518)/N(6)-dimethyladenosine(1519) in 16S rRNA + 4 S-adenosyl-L-homocysteine + 4 H(+). In terms of biological role, specifically dimethylates two adjacent adenosines (A1518 and A1519) in the loop of a conserved hairpin near the 3'-end of 16S rRNA in the 30S particle. May play a critical role in biogenesis of 30S subunits. The protein is Ribosomal RNA small subunit methyltransferase A of Clostridium botulinum (strain Kyoto / Type A2).